A 246-amino-acid chain; its full sequence is tRNA (guanine-N(7)-)-methyltransferase (246 aa).

Glu-77, Glu-102, Asp-129, and Asp-152 together coordinate S-adenosyl-L-methionine. The active site involves Asp-152. Substrate-binding positions include Lys-156, Asp-188, and 225 to 228 (TKFE).

Belongs to the class I-like SAM-binding methyltransferase superfamily. TrmB family.

It catalyses the reaction guanosine(46) in tRNA + S-adenosyl-L-methionine = N(7)-methylguanosine(46) in tRNA + S-adenosyl-L-homocysteine. Its pathway is tRNA modification; N(7)-methylguanine-tRNA biosynthesis. Its function is as follows. Catalyzes the formation of N(7)-methylguanine at position 46 (m7G46) in tRNA. In Haemophilus influenzae (strain ATCC 51907 / DSM 11121 / KW20 / Rd), this protein is tRNA (guanine-N(7)-)-methyltransferase.